Consider the following 163-residue polypeptide: NADH-quinone oxidoreductase subunit I (163 aa).

2 consecutive 4Fe-4S ferredoxin-type domains span residues 54-84 (LRRYPNGEERCIACKLCEAVCPAQAITIDAE) and 94-123 (TRYDIDMTKCIYCGFCQEACPVDAIVEGPN). Residues Cys-64, Cys-67, Cys-70, Cys-74, Cys-103, Cys-106, Cys-109, and Cys-113 each coordinate [4Fe-4S] cluster.

This sequence belongs to the complex I 23 kDa subunit family. As to quaternary structure, NDH-1 is composed of at least 14 different subunits, Nqo1 to Nqo14. The complex has a L-shaped structure, with the hydrophobic arm (subunits Nqo7, Nqo8, Nqo10 to Nqo14) embedded in the inner membrane and the hydrophilic peripheral arm (subunits Nqo1 to Nqo6, Nqo9) protruding into the bacterial cytoplasm. The hydrophilic domain contains all the redox centers. NADH-quinone oxidoreductase forms a supercomplex with ubiquinol-cytochrome c reductase complex (complex III or cytochrome b-c1 complex) and cytochrome c oxidase (complex IV), which stabilizes the NADH-quinone oxidoreductase complex. The cofactor is [4Fe-4S] cluster.

Its subcellular location is the cell inner membrane. It catalyses the reaction a quinone + NADH + 5 H(+)(in) = a quinol + NAD(+) + 4 H(+)(out). Its function is as follows. NDH-1 shuttles electrons from NADH, via FMN and iron-sulfur (Fe-S) centers, to quinones in the respiratory chain. The immediate electron acceptor for the enzyme in this species is believed to be ubiquinone. Couples the redox reaction to proton translocation (for every two electrons transferred, four hydrogen ions are translocated across the cytoplasmic membrane), and thus conserves the redox energy in a proton gradient. The sequence is that of NADH-quinone oxidoreductase subunit I from Paracoccus denitrificans (strain Pd 1222).